The sequence spans 197 residues: Surfactant protein C (197 aa).

A propeptide spanning residues 1 to 23 (MDVGSKEVLMESPPDYSAAPRGR) is cleaved from the precursor. S-palmitoyl cysteine attachment occurs at residues C28 and C29. Residues 59-197 (HMSQKHTEMV…LCGEVPLYYI (139 aa)) constitute a propeptide that is removed on maturation. The BRICHOS domain maps to 94–197 (FSIGSTGLVV…LCGEVPLYYI (104 aa)). 2 cysteine pairs are disulfide-bonded: C120–C148 and C121–C189.

It localises to the secreted. The protein resides in the extracellular space. It is found in the surface film. Its function is as follows. Pulmonary surfactant associated proteins promote alveolar stability by lowering the surface tension at the air-liquid interface in the peripheral air spaces. In Homo sapiens (Human), this protein is Surfactant protein C.